Here is a 798-residue protein sequence, read N- to C-terminus: Tripartite terminase subunit 1 (798 aa).

The segment at 191-219 adopts a C3H1-type zinc-finger fold; it reads CFQCYEELMAVPNQGRSINRRMQGLLCDH. Over residues 416–429 the composition is skewed to low complexity; the sequence is AAGAARSRAEAASG. Residues 416-458 are disordered; the sequence is AAGAARSRAEAASGAGAGGEEGAGAAAGRGNTGGDEGAGTTTA. The segment covering 430–452 has biased composition (gly residues); sequence AGAGGEEGAGAAAGRGNTGGDEG. 674–681 lines the ATP pocket; that stretch reads YNETFGKQ.

The protein belongs to the herpesviridae TRM1 protein family. In terms of assembly, associates with TRM2 and TRM3 to form the tripartite terminase complex. Interacts with portal protein.

The protein resides in the host nucleus. In terms of biological role, component of the molecular motor that translocates viral genomic DNA in empty capsid during DNA packaging. Forms a tripartite terminase complex together with TRM2 and TRM3 in the host cytoplasm. Once the complex reaches the host nucleus, it interacts with the capsid portal vertex. This portal forms a ring in which genomic DNA is translocated into the capsid. TRM1 carries an endonuclease activity that plays an important role for the cleavage of concatemeric viral DNA into unit length genomes. The polypeptide is Tripartite terminase subunit 1 (Murid herpesvirus 1 (strain Smith) (MuHV-1)).